The chain runs to 107 residues: uncharacterized protein (107 aa).

A helical transmembrane segment spans residues 9–31; the sequence is AAAIITAPTILAMMSTVLRALIF.

It is found in the membrane. This is an uncharacterized protein from Archaeoglobus fulgidus (strain ATCC 49558 / DSM 4304 / JCM 9628 / NBRC 100126 / VC-16).